A 324-amino-acid chain; its full sequence is Glutathione synthetase (324 aa).

Residues 124–309 (KLAIAQFREF…VAGMFIDALE (186 aa)) form the ATP-grasp domain. Position 150–206 (150–206 (HAEQGDVIFKPLDGMGGAGIFRVGADGMNLGSVIETLTHNGTRTVMAQQYIPAIRDG)) interacts with ATP. Residues E280 and N282 each contribute to the Mg(2+) site.

The protein belongs to the prokaryotic GSH synthase family. Requires Mg(2+) as cofactor. The cofactor is Mn(2+).

It catalyses the reaction gamma-L-glutamyl-L-cysteine + glycine + ATP = glutathione + ADP + phosphate + H(+). It participates in sulfur metabolism; glutathione biosynthesis; glutathione from L-cysteine and L-glutamate: step 2/2. The protein is Glutathione synthetase of Ralstonia nicotianae (strain ATCC BAA-1114 / GMI1000) (Ralstonia solanacearum).